Here is a 111-residue protein sequence, read N- to C-terminus: Toxin 3FTx-Tri3 (111 aa).

Residues 1-19 (MKTLLLALVVVAFMCLGSA) form the signal peptide. A propeptide spanning residues 20–34 (DEVGLGNEQIDRGRR) is cleaved from the precursor. Gln-35 is modified (pyrrolidone carboxylic acid). 4 disulfide bridges follow: Cys-44–Cys-68, Cys-47–Cys-87, Cys-91–Cys-102, and Cys-103–Cys-108.

It belongs to the three-finger toxin family. Ancestral subfamily. Boigatoxin sub-subfamily. In terms of tissue distribution, expressed by the venom gland.

It localises to the secreted. Potent postsynaptic neurotoxin. Displays readily reversible competitive antagonism at the nicotinic acetylcholine receptor (nAChR). This chain is Toxin 3FTx-Tri3, found in Trimorphodon biscutatus (Western lyre snake).